A 246-amino-acid chain; its full sequence is Probable transcriptional regulatory protein KPK_1906 (246 aa).

Belongs to the TACO1 family.

The protein localises to the cytoplasm. The sequence is that of Probable transcriptional regulatory protein KPK_1906 from Klebsiella pneumoniae (strain 342).